A 1389-amino-acid chain; its full sequence is Carboxypeptidase D (1389 aa).

The first 25 residues, 1–25 (MAGAARGLLWAALSLCLLPEPLRAA), serve as a signal peptide directing secretion. The Extracellular segment spans residues 26 to 1308 (HIKKAEAAAA…ENRIFGLPRE (1283 aa)). The Peptidase M14 1 domain maps to 46-383 (RYLHAAELGQ…ESLLTFIEKV (338 aa)). The tract at residues 95–133 (LPEARQDGEKKKKEEEEEEEEEEGEEGGGGALPGRPQVK) is disordered. Positions 96–108 (PEARQDGEKKKKE) are enriched in basic and acidic residues. The segment covering 109-120 (EEEEEEEEEGEE) has biased composition (acidic residues). Zn(2+) is bound by residues histidine 139 and glutamate 142. Asparagine 172 is a glycosylation site (N-linked (GlcNAc...) asparagine). A disordered region spans residues 188-235 (ERAREGDCGGGGGGGGEGGGEPGGRENSRGRDLNRSFPDQFGSAQPDL). A compositionally biased stretch (gly residues) spans 195–209 (CGGGGGGGGEGGGEP). A compositionally biased stretch (basic and acidic residues) spans 210-221 (GGRENSRGRDLN). N-linked (GlcNAc...) asparagine glycosylation is present at asparagine 221. Residue histidine 260 coordinates Zn(2+). The active-site Proton donor/acceptor is glutamate 353. Residues asparagine 402, asparagine 413, asparagine 432, and asparagine 472 are each glycosylated (N-linked (GlcNAc...) asparagine). The Peptidase M14 2 domain maps to 511–801 (RHHHFSDMEI…RSLLQFIKQV (291 aa)). Histidine 573 and glutamate 576 together coordinate Zn(2+). The segment at 614–639 (SMNPDGYEKSQEGDRGGTVGRNNSNN) is disordered. Positions 619 to 628 (GYEKSQEGDR) are enriched in basic and acidic residues. Residue asparagine 635 is glycosylated (N-linked (GlcNAc...) asparagine). Histidine 680 lines the Zn(2+) pocket. Residue glutamate 771 is the Proton donor/acceptor of the active site. Residues asparagine 820, asparagine 876, asparagine 958, asparagine 981, asparagine 1073, and asparagine 1151 are each glycosylated (N-linked (GlcNAc...) asparagine). In terms of domain architecture, Peptidase M14 3 spans 935 to 1220 (RYRPYKDLSE…KSLLSMLVEV (286 aa)). Residues 1309–1329 (LVVTVAGASMSALVLTACIIW) traverse the membrane as a helical segment. 3 S-palmitoyl cysteine lipidation sites follow: cysteine 1326, cysteine 1330, and cysteine 1332. At 1330 to 1389 (CVCSIKSNRHKDGFPTLRQHHDDYEDEIRMMSTGSKKSLLSHEFQDETDTEEETLYSSKH) the chain is on the cytoplasmic side. The disordered stretch occupies residues 1367 to 1389 (SLLSHEFQDETDTEEETLYSSKH).

It belongs to the peptidase M14 family. Binds to pre-S, hepatitis B virus large envelope protein, via the carboxypeptidase-like domain. Zn(2+) serves as cofactor. Post-translationally, the N-terminus is blocked. As to expression, expressed in liver, lung, kidney, heart, stomach, pancreas, spleen, gall bladder and intestine, but not in skeletal muscle.

It is found in the cell membrane. It carries out the reaction Releases C-terminal Arg and Lys from polypeptides.. The polypeptide is Carboxypeptidase D (CPD) (Anas platyrhynchos (Mallard)).